The primary structure comprises 202 residues: Small ribosomal subunit protein uS4 (202 aa).

The interval 22 to 43 (TRKSARRAYPPGQHGQNRKKRS) is disordered. An S4 RNA-binding domain is found at 90–152 (MRLDNTVFRL…APSRKLVENN (63 aa)).

The protein belongs to the universal ribosomal protein uS4 family. As to quaternary structure, part of the 30S ribosomal subunit. Contacts protein S5. The interaction surface between S4 and S5 is involved in control of translational fidelity.

In terms of biological role, one of the primary rRNA binding proteins, it binds directly to 16S rRNA where it nucleates assembly of the body of the 30S subunit. With S5 and S12 plays an important role in translational accuracy. In Trichormus variabilis (strain ATCC 29413 / PCC 7937) (Anabaena variabilis), this protein is Small ribosomal subunit protein uS4.